The sequence spans 277 residues: Carbonyl reductase [NADPH] 1 (277 aa).

Residue S2 is modified to N-acetylserine. Residues S2 and S30 each carry the phosphoserine modification. Residues 10 to 34, 63 to 64, and N90 contribute to the NADP(+) site; these read VTGA…GDVV and DI. Glutathione-binding positions include 95-97 and Q106; that span reads FKT. S140 is a binding site for substrate. 193–194 contacts glutathione; sequence AY. Y194 functions as the Proton acceptor in the catalytic mechanism. Residues 194–198 and 231–233 contribute to the NADP(+) site; these read YGVTK and VRT. The residue at position 239 (K239) is an N6-1-carboxyethyl lysine.

Belongs to the short-chain dehydrogenases/reductases (SDR) family. In terms of assembly, monomer.

It is found in the cytoplasm. It carries out the reaction a secondary alcohol + NADP(+) = a ketone + NADPH + H(+). It catalyses the reaction prostaglandin F2alpha + NADP(+) = prostaglandin E2 + NADPH + H(+). The catalysed reaction is prostaglandin E1 + NADP(+) = 15-oxoprostaglandin E1 + NADPH + H(+). The enzyme catalyses menadione + NADPH + H(+) = menadiol + NADP(+). It carries out the reaction prostaglandin D2 + NADP(+) = 15-oxoprostaglandin D2 + NADPH + H(+). It catalyses the reaction prostaglandin E2 + NADP(+) = 15-oxoprostaglandin E2 + NADPH + H(+). The catalysed reaction is prostaglandin F2alpha + NADP(+) = 15-oxoprostaglandin F2alpha + NADPH + H(+). The enzyme catalyses daunorubicin + NADPH + H(+) = 13-dihydrodaunorubicin + NADP(+). It carries out the reaction S-nitrosoglutathione + NADPH + H(+) = S-(hydroxysulfenamide)glutathione + NADP(+). It catalyses the reaction a primary alcohol + NADP(+) = an aldehyde + NADPH + H(+). The catalysed reaction is cortisol + NADPH + H(+) = 20beta-dihydrocortisol + NADP(+). The enzyme catalyses corticosterone + NADPH + H(+) = 20beta-dihydrocorticosterone + NADP(+). Functionally, NADPH-dependent reductase with broad substrate specificity. Catalyzes the reduction of a wide variety of carbonyl compounds including quinones, prostaglandins, menadione, plus various xenobiotics. Catalyzes the reduction of the antitumor anthracyclines doxorubicin and daunorubicin to the cardiotoxic compounds doxorubicinol and daunorubicinol. Can convert prostaglandin E to prostaglandin F2-alpha. Can bind glutathione, which explains its higher affinity for glutathione-conjugated substrates. Catalyzes the reduction of S-nitrosoglutathione. In addition, participates in the glucocorticoid metabolism by catalyzing the NADPH-dependent cortisol/corticosterone into 20beta-dihydrocortisol (20b-DHF) or 20beta-corticosterone (20b-DHB), which are weak agonists of NR3C1 and NR3C2 in adipose tissue. The chain is Carbonyl reductase [NADPH] 1 from Bos taurus (Bovine).